The sequence spans 619 residues: TOX high mobility group box family member 4 (619 aa).

Disordered stretches follow at residues 155–227 (LSLG…QKPV), 304–335 (ELDP…TESP), and 436–458 (LPPP…QQQV). Threonine 176 is modified (phosphothreonine). Serine 178 and serine 182 each carry phosphoserine. The segment covering 183 to 193 (LHEDGVDDFRR) has biased composition (basic and acidic residues). The segment covering 208-218 (KQKAPKKRKKK) has biased composition (basic residues). Residues 213–218 (KKRKKK) carry the Nuclear localization signal motif. The HMG box DNA-binding region spans 223 to 291 (PQKPVSAYAL…EYLKALAAYK (69 aa)). Threonine 313 bears the Phosphothreonine mark. Serine 315 carries the phosphoserine modification. Over residues 320–335 (TTADPASPAPASTESP) the composition is skewed to low complexity. The span at 436 to 453 (LPPPRLQPPPLQQMPQPP) shows a compositional bias: pro residues. Arginine 479 carries the asymmetric dimethylarginine modification. Phosphoserine occurs at positions 531, 548, 550, 558, 560, and 565.

In terms of assembly, component of the PNUTS-PP1 phosphatase complex, composed of PPP1R10/PNUTS, TOX4, WDR82 and PPP1CA or PPP1CB or PPP1CC. Interacts with PPP1R10/PNUTS. Interacts with FOXO1 and CREB1 (increased by cAMP); FOXO1 and CREB1 are required for full induction of TOX4-dependent activity and the interactions are inhibited by insulin.

The protein resides in the nucleus. It localises to the chromosome. Its activity is regulated as follows. In liver, recruited to target gene promoters following treatment with dexamethasone and cAMP. Binding is decreased in presence of insulin. Transcription factor that modulates cell fate reprogramming from the somatic state to the pluripotent and neuronal fate. In liver, controls the expression of hormone-regulated gluconeogenic genes such as G6PC1 and PCK1. This regulation is independent of the insulin receptor activation. Also acts as a regulatory component of protein phosphatase 1 (PP1) complexes. Component of the PNUTS-PP1 protein phosphatase complex, a PP1 complex that regulates RNA polymerase II transcription pause-release. PNUTS-PP1 also plays a role in the control of chromatin structure and cell cycle progression during the transition from mitosis into interphase. This Rattus norvegicus (Rat) protein is TOX high mobility group box family member 4 (Tox4).